Consider the following 143-residue polypeptide: Large ribosomal subunit protein bL17 (143 aa).

Belongs to the bacterial ribosomal protein bL17 family. Part of the 50S ribosomal subunit. Contacts protein L32.

The protein is Large ribosomal subunit protein bL17 of Bartonella quintana (strain Toulouse) (Rochalimaea quintana).